Here is a 1056-residue protein sequence, read N- to C-terminus: Isoleucine--tRNA ligase (1056 aa).

The span at 1–13 (MCDQGEVSSQNSS) shows a compositional bias: polar residues. Residues 1–26 (MCDQGEVSSQNSSDYKEQRPTPRPNL) are disordered. The 'HIGH' region signature appears at 63-73 (PFANGLPHFGH). A 'KMSKS' region motif is present at residues 632–636 (KASKS). Lys-635 contributes to the ATP binding site.

It belongs to the class-I aminoacyl-tRNA synthetase family. IleS type 2 subfamily. Monomer. Zn(2+) serves as cofactor.

The protein localises to the cytoplasm. The enzyme catalyses tRNA(Ile) + L-isoleucine + ATP = L-isoleucyl-tRNA(Ile) + AMP + diphosphate. Its function is as follows. Catalyzes the attachment of isoleucine to tRNA(Ile). As IleRS can inadvertently accommodate and process structurally similar amino acids such as valine, to avoid such errors it has two additional distinct tRNA(Ile)-dependent editing activities. One activity is designated as 'pretransfer' editing and involves the hydrolysis of activated Val-AMP. The other activity is designated 'posttransfer' editing and involves deacylation of mischarged Val-tRNA(Ile). The chain is Isoleucine--tRNA ligase from Tropheryma whipplei (strain TW08/27) (Whipple's bacillus).